The chain runs to 366 residues: Sulfite reductase, dissimilatory-type subunit beta (366 aa).

8 residues coordinate [4Fe-4S] cluster: cysteine 140, cysteine 177, cysteine 178, cysteine 182, cysteine 220, cysteine 241, cysteine 244, and cysteine 247. Siroheme is bound at residue cysteine 182. The 31-residue stretch at 232–262 (KTIKVDVEKCMYCGNCYTMCPGMPLFDPEND) folds into the 4Fe-4S ferredoxin-type domain.

Heterotetramer of two alpha and two beta subunits. [4Fe-4S] cluster serves as cofactor. It depends on siroheme as a cofactor.

The protein localises to the membrane. It catalyses the reaction [DsrC protein]-trisulfide + NAD(+) + 3 H2O = [DsrC protein]-dithiol + sulfite + NADH + 3 H(+). In terms of biological role, catalyzes the reduction of sulfite to sulfide. This is the terminal oxidation reaction in sulfate respiration. The polypeptide is Sulfite reductase, dissimilatory-type subunit beta (dsrB) (Archaeoglobus fulgidus (strain ATCC 49558 / DSM 4304 / JCM 9628 / NBRC 100126 / VC-16)).